A 370-amino-acid chain; its full sequence is Histidinol-phosphate aminotransferase 3 (370 aa).

Lys-233 is modified (N6-(pyridoxal phosphate)lysine).

Belongs to the class-II pyridoxal-phosphate-dependent aminotransferase family. Histidinol-phosphate aminotransferase subfamily. As to quaternary structure, homodimer. The cofactor is pyridoxal 5'-phosphate.

It carries out the reaction L-histidinol phosphate + 2-oxoglutarate = 3-(imidazol-4-yl)-2-oxopropyl phosphate + L-glutamate. The protein operates within amino-acid biosynthesis; L-histidine biosynthesis; L-histidine from 5-phospho-alpha-D-ribose 1-diphosphate: step 7/9. The protein is Histidinol-phosphate aminotransferase 3 of Burkholderia lata (strain ATCC 17760 / DSM 23089 / LMG 22485 / NCIMB 9086 / R18194 / 383).